We begin with the raw amino-acid sequence, 419 residues long: Octopressin receptor (419 aa).

At 1 to 37 (MENFTEENLHPWITTTTRVYNNVTIFPQYDDELGKFE) the chain is on the extracellular side. Residues Asn-3 and Asn-22 are each glycosylated (N-linked (GlcNAc...) asparagine). A helical transmembrane segment spans residues 38–58 (IMVLCILCFMALFGNAVVLIV). Topologically, residues 59-80 (LRIKKTTLTRMQLLIVYLSVTD) are cytoplasmic. A helical transmembrane segment spans residues 81–101 (ISVALFHILPTIILKINVYFL). Residues 102–108 (GDISACR) are Extracellular-facing. Cysteines 107 and 182 form a disulfide. The helical transmembrane segment at 109-129 (VYQFITVAELYASSFVLIVTA) threads the bilayer. Over 130–153 (LDRYISICHPLAAHMWTNRRVHMT) the chain is Cytoplasmic. Residues 154–174 (TALALFLALMCSLPQLDAVLV) traverse the membrane as a helical segment. The Extracellular segment spans residues 175 to 192 (DFHGGKLCRPNLTTELAN). The N-linked (GlcNAc...) asparagine glycan is linked to Asn-185. A helical transmembrane segment spans residues 193-213 (IAYSWWAFCSVFFVPLLLLIF). At 214 to 292 (FYGRICFVVW…VSKSKIKTIK (79 aa)) the chain is on the cytoplasmic side. The segment at 253–274 (SQTSSENRVKNYSDARDKDSSR) is disordered. Basic and acidic residues predominate over residues 259-274 (NRVKNYSDARDKDSSR). The helical transmembrane segment at 293 to 313 (LTFSVVACFIICYTPFFTVLM) threads the bilayer. The Extracellular portion of the chain corresponds to 314–329 (ARTYDAELSSAQTPAL). A helical transmembrane segment spans residues 330–350 (VILSLLPSLNSCTNPWIYLAF). The Cytoplasmic portion of the chain corresponds to 351–419 (SGKVWCRQQS…TTALMSSSPC (69 aa)).

The protein belongs to the G-protein coupled receptor 1 family. Vasopressin/oxytocin receptor subfamily. In terms of tissue distribution, present in the nervous system and peripheral tissues.

The protein resides in the cell membrane. In terms of biological role, acts as a receptor for octopressin. This Octopus vulgaris (Common octopus) protein is Octopressin receptor.